Consider the following 43-residue polypeptide: uncharacterized protein (43 aa).

Residues 1–16 form the signal peptide; the sequence is MKLLNFILIIFNALKS. Asparagine 37 carries an N-linked (GlcNAc...) asparagine; by host glycan.

This is an uncharacterized protein from Acheta domesticus (House cricket).